We begin with the raw amino-acid sequence, 788 residues long: Cadherin-10 (788 aa).

Positions 1 to 22 are cleaved as a signal peptide; that stretch reads MTIHQFLLLFLFWVCLPHFCSP. Residues 23 to 54 constitute a propeptide that is removed on maturation; it reads EIMFRRTPVPQQRILSSRVPRSDGKILHRQKR. 5 Cadherin domains span residues 55–160, 161–269, 270–384, 385–487, and 488–606; these read GWMW…EPTF, PEEI…PPRF, PQNT…PPVF, SRSS…DNAP, and QFAV…LLLP. The Extracellular segment spans residues 55–613; that stretch reads GWMWNQFFLL…LLPAGLSTGA (559 aa). N-linked (GlcNAc...) asparagine glycosylation occurs at asparagine 256. Residues asparagine 438, asparagine 456, and asparagine 534 are each glycosylated (N-linked (GlcNAc...) asparagine). A helical transmembrane segment spans residues 614–634; sequence LIAILLCIIILLVIVVLFAAL. The Cytoplasmic segment spans residues 635–788; it reads KRQRKKEPLI…YGGGESDKDS (154 aa). Phosphoserine occurs at positions 784 and 788.

As to expression, predominantly expressed in brain. Also found in adult and fetal kidney. Very low levels detected in prostate and fetal lung.

It is found in the cell membrane. In terms of biological role, cadherins are calcium-dependent cell adhesion proteins. They preferentially interact with themselves in a homophilic manner in connecting cells; cadherins may thus contribute to the sorting of heterogeneous cell types. This chain is Cadherin-10 (CDH10), found in Homo sapiens (Human).